Reading from the N-terminus, the 218-residue chain is Recombination protein RecR (218 aa).

The segment at 56-71 (CRICCNISREEVCRIC) adopts a C4-type zinc-finger fold. In terms of domain architecture, Toprim spans 79-195 (GTICVVEEPK…VVSRLASGMP (117 aa)).

This sequence belongs to the RecR family.

In terms of biological role, may play a role in DNA repair. It seems to be involved in an RecBC-independent recombinational process of DNA repair. It may act with RecF and RecO. This chain is Recombination protein RecR, found in Corynebacterium glutamicum (strain R).